The sequence spans 538 residues: Bifunctional purine biosynthesis protein PurH (538 aa).

Residues 6 to 158 (KHIPAPDLHR…KNHAYVATVV (153 aa)) enclose the MGS-like domain.

This sequence belongs to the PurH family.

It carries out the reaction (6R)-10-formyltetrahydrofolate + 5-amino-1-(5-phospho-beta-D-ribosyl)imidazole-4-carboxamide = 5-formamido-1-(5-phospho-D-ribosyl)imidazole-4-carboxamide + (6S)-5,6,7,8-tetrahydrofolate. The catalysed reaction is IMP + H2O = 5-formamido-1-(5-phospho-D-ribosyl)imidazole-4-carboxamide. It functions in the pathway purine metabolism; IMP biosynthesis via de novo pathway; 5-formamido-1-(5-phospho-D-ribosyl)imidazole-4-carboxamide from 5-amino-1-(5-phospho-D-ribosyl)imidazole-4-carboxamide (10-formyl THF route): step 1/1. It participates in purine metabolism; IMP biosynthesis via de novo pathway; IMP from 5-formamido-1-(5-phospho-D-ribosyl)imidazole-4-carboxamide: step 1/1. This is Bifunctional purine biosynthesis protein PurH from Brucella anthropi (strain ATCC 49188 / DSM 6882 / CCUG 24695 / JCM 21032 / LMG 3331 / NBRC 15819 / NCTC 12168 / Alc 37) (Ochrobactrum anthropi).